A 453-amino-acid chain; its full sequence is Probable glycine dehydrogenase (decarboxylating) subunit 1 (453 aa).

This sequence belongs to the GcvP family. N-terminal subunit subfamily. The glycine cleavage system is composed of four proteins: P, T, L and H. In this organism, the P 'protein' is a heterodimer of two subunits.

The enzyme catalyses N(6)-[(R)-lipoyl]-L-lysyl-[glycine-cleavage complex H protein] + glycine + H(+) = N(6)-[(R)-S(8)-aminomethyldihydrolipoyl]-L-lysyl-[glycine-cleavage complex H protein] + CO2. In terms of biological role, the glycine cleavage system catalyzes the degradation of glycine. The P protein binds the alpha-amino group of glycine through its pyridoxal phosphate cofactor; CO(2) is released and the remaining methylamine moiety is then transferred to the lipoamide cofactor of the H protein. This is Probable glycine dehydrogenase (decarboxylating) subunit 1 from Dictyoglomus thermophilum (strain ATCC 35947 / DSM 3960 / H-6-12).